A 452-amino-acid chain; its full sequence is Cobyrinate a,c-diamide synthase (452 aa).

The region spanning 248-441 (RVAYALDAAF…LHIHFYQNLA (194 aa)) is the GATase cobBQ-type domain. The active-site Nucleophile is the Cys-330.

Belongs to the CobB/CbiA family. Mg(2+) is required as a cofactor.

It carries out the reaction cob(II)yrinate + 2 L-glutamine + 2 ATP + 2 H2O = cob(II)yrinate a,c diamide + 2 L-glutamate + 2 ADP + 2 phosphate + 2 H(+). It functions in the pathway cofactor biosynthesis; adenosylcobalamin biosynthesis; cob(II)yrinate a,c-diamide from sirohydrochlorin (anaerobic route): step 10/10. Catalyzes the ATP-dependent amidation of the two carboxylate groups at positions a and c of cobyrinate, using either L-glutamine or ammonia as the nitrogen source. In Listeria monocytogenes serovar 1/2a (strain ATCC BAA-679 / EGD-e), this protein is Cobyrinate a,c-diamide synthase.